The sequence spans 603 residues: Serine/threonine-protein kinase PLK1 (603 aa).

Lysine 19 participates in a covalent cross-link: Glycyl lysine isopeptide (Lys-Gly) (interchain with G-Cter in ubiquitin). One can recognise a Protein kinase domain in the interval tyrosine 53–phenylalanine 305. ATP contacts are provided by residues leucine 59–cysteine 67 and lysine 82. A Phosphoserine modification is found at serine 103. An ATP-binding site is contributed by glutamate 131. At serine 137 the chain carries Phosphoserine. Aspartate 176 serves as the catalytic Proton acceptor. ATP contacts are provided by residues lysine 178–asparagine 181 and aspartate 194. Residues aspartate 194–glutamate 221 are activation loop. Threonine 210 carries the post-translational modification Phosphothreonine; by AURKA. Phosphothreonine is present on threonine 214. Serine 269 and serine 335 each carry phosphoserine; by autocatalysis. Residues arginine 337–leucine 340 carry the D-box that targets the protein for proteasomal degradation in anaphase motif. Lysine 338 participates in a covalent cross-link: Glycyl lysine isopeptide (Lys-Gly) (interchain with G-Cter in SUMO2). Residues serine 375 and serine 450 each carry the phosphoserine modification. Residues tryptophan 410–glutamate 488 form the POLO box 1 domain. Residue lysine 492 forms a Glycyl lysine isopeptide (Lys-Gly) (interchain with G-Cter in ubiquitin) linkage. The linker stretch occupies residues alanine 493 to arginine 507. The residue at position 498 (threonine 498) is a Phosphothreonine. A POLO box 2 domain is found at tyrosine 510–serine 592. An important for interaction with phosphorylated proteins region spans residues histidine 538 to lysine 540.

Belongs to the protein kinase superfamily. Ser/Thr protein kinase family. CDC5/Polo subfamily. As to quaternary structure, interacts with CEP170 and EVI5. Interacts and phosphorylates ERCC6L. Interacts with FAM29A. Interacts with SLX4/BTBD12 and TTDN1. Interacts with BUB1B. Interacts (via POLO-box domain) with the phosphorylated form of BUB1, CENPU and CDC25C. Interacts with isoform 3 of SGO1. Interacts with BORA, KIF2A and AURKA. Interacts with TOPORS and CYLD. Interacts with ECT2; the interaction is stimulated upon phosphorylation of ECT2 on 'Thr-444'. Interacts with PRC1. Interacts with KIF20A/MKLP2 (when phosphorylated), leading to the recruitment at the central spindle. Interacts (via POLO box domains) with PPP1R12A/MYPT1 (when previously phosphorylated by CDK1). Part of an astrin (SPAG5)-kinastrin (SKAP) complex containing KNSTRN, SPAG5, PLK1, DYNLL1 and SGO2A. Interacts with BIRC6/bruce. Interacts with CDK1-phosphorylated DCTN6 during mitotic prometaphase; the interaction facilitates recruitment to kinetochores. Interacts with CDK1-phosphorylated FRY; this interaction occurs in mitotic cells, but not in interphase cells. FRY interaction facilitates AURKA-mediated PLK1 phosphorylation. Interacts with CEP68; the interaction phosphorylates CEP68. Interacts (via POLO-box domain) with DCTN1. Interacts with CEP20 in later G1, S, G2 and M phases of the cell cycle; this interaction recruits PLK1 to centrosomes, a step required for S phase progression. Interacts with HSF1; this interaction increases upon heat shock but does not modulate neither HSF1 homotrimerization nor DNA-binding activities. Interacts with HNRNPU; this interaction induces phosphorylation of HNRNPU in mitosis. Interacts (via its N-terminus) with RIOK2. Interacts with KLHL22. Interacts (via POLO box domains) with NEDD9/HEF1 (via C-terminus). Interacts (via RVxF motif) with FIRRM; regulates PLK1 kinase activity. Interacts with SKA3; the interaction promotes the stability of PLK1. Interacts with the MTMR3:MTMR4 heterooligomer; brings CEP55 and PLK1 together during early mitosis, regulating the phosphorylation of CEP55 by PLK1 and its recruitment to the midbody where it can mediate cell abscission. Catalytic activity is enhanced by phosphorylation of Thr-210. Phosphorylation at Thr-210 is first detected on centrosomes in the G2 phase of the cell cycle, peaks in prometaphase and gradually disappears from centrosomes during anaphase. Dephosphorylation at Thr-210 at centrosomes is probably mediated by protein phosphatase 1C (PP1C), via interaction with PPP1R12A/MYPT1. Autophosphorylation and phosphorylation of Ser-137 may not be significant for the activation of PLK1 during mitosis, but may enhance catalytic activity during recovery after DNA damage checkpoint. Phosphorylated in vitro by STK10. In terms of processing, ubiquitinated by the anaphase promoting complex/cyclosome (APC/C) in anaphase and following DNA damage, leading to its degradation by the proteasome. Ubiquitination is mediated via its interaction with FZR1/CDH1. Ubiquitination and subsequent degradation prevents entry into mitosis and is essential to maintain an efficient G2 DNA damage checkpoint. Monoubiquitination at Lys-492 by the BCR(KLHL22) ubiquitin ligase complex does not lead to degradation: it promotes PLK1 dissociation from phosphoreceptor proteins and subsequent removal from kinetochores, allowing silencing of the spindle assembly checkpoint (SAC) and chromosome segregation. As to expression, newborn and adult spleen, fetal and newborn kidney, liver, brain, thymus and adult bone marrow, thymus, ovary and testes.

It is found in the nucleus. Its subcellular location is the chromosome. The protein resides in the centromere. It localises to the kinetochore. The protein localises to the cytoplasm. It is found in the cytoskeleton. Its subcellular location is the microtubule organizing center. The protein resides in the centrosome. It localises to the spindle. The protein localises to the midbody. The enzyme catalyses L-seryl-[protein] + ATP = O-phospho-L-seryl-[protein] + ADP + H(+). It catalyses the reaction L-threonyl-[protein] + ATP = O-phospho-L-threonyl-[protein] + ADP + H(+). With respect to regulation, activated by phosphorylation of Thr-210 by AURKA; phosphorylation by AURKA is enhanced by BORA. Once activated, activity is stimulated by binding target proteins. Binding of target proteins has no effect on the non-activated kinase. Several inhibitors targeting PLKs are currently in development and are under investigation in a growing number of clinical trials, such as BI 2536, an ATP-competitive PLK1 inhibitor or BI 6727, a dihydropteridinone that specifically inhibits the catalytic activity of PLK1. In terms of biological role, serine/threonine-protein kinase that performs several important functions throughout M phase of the cell cycle, including the regulation of centrosome maturation and spindle assembly, the removal of cohesins from chromosome arms, the inactivation of anaphase-promoting complex/cyclosome (APC/C) inhibitors, and the regulation of mitotic exit and cytokinesis. Polo-like kinase proteins act by binding and phosphorylating proteins that are already phosphorylated on a specific motif recognized by the POLO box domains. Phosphorylates BORA, BUB1B/BUBR1, CCNB1, CDC25C, CEP55, ECT2, ERCC6L, FBXO5/EMI1, FOXM1, KIF20A/MKLP2, CENPU, NEDD1, NINL, NPM1, NUDC, PKMYT1/MYT1, KIZ, MRE11, PPP1R12A/MYPT1, POLQ, PRC1, RACGAP1/CYK4, RAD51, RHNO1, SGO1, STAG2/SA2, TEX14, TOPORS, p73/TP73, TPT1, WEE1 and HNRNPU. Plays a key role in centrosome functions and the assembly of bipolar spindles by phosphorylating KIZ, NEDD1 and NINL. NEDD1 phosphorylation promotes subsequent targeting of the gamma-tubulin ring complex (gTuRC) to the centrosome, an important step for spindle formation. Phosphorylation of NINL component of the centrosome leads to NINL dissociation from other centrosomal proteins. Involved in mitosis exit and cytokinesis by phosphorylating CEP55, ECT2, KIF20A/MKLP2, CENPU, PRC1 and RACGAP1. Recruited at the central spindle by phosphorylating and docking PRC1 and KIF20A/MKLP2; creates its own docking sites on PRC1 and KIF20A/MKLP2 by mediating phosphorylation of sites subsequently recognized by the POLO box domains. Phosphorylates RACGAP1, thereby creating a docking site for the Rho GTP exchange factor ECT2 that is essential for the cleavage furrow formation. Promotes the central spindle recruitment of ECT2. Plays a central role in G2/M transition of mitotic cell cycle by phosphorylating CCNB1, CDC25C, FOXM1, CENPU, PKMYT1/MYT1, PPP1R12A/MYPT1 and WEE1. Part of a regulatory circuit that promotes the activation of CDK1 by phosphorylating the positive regulator CDC25C and inhibiting the negative regulators WEE1 and PKMYT1/MYT1. Also acts by mediating phosphorylation of cyclin-B1 (CCNB1) on centrosomes in prophase. Phosphorylates FOXM1, a key mitotic transcription regulator, leading to enhance FOXM1 transcriptional activity. Involved in kinetochore functions and sister chromatid cohesion by phosphorylating BUB1B/BUBR1, FBXO5/EMI1 and STAG2/SA2. PLK1 is high on non-attached kinetochores suggesting a role of PLK1 in kinetochore attachment or in spindle assembly checkpoint (SAC) regulation. Required for kinetochore localization of BUB1B. Regulates the dissociation of cohesin from chromosomes by phosphorylating cohesin subunits such as STAG2/SA2. Phosphorylates SGO1: required for spindle pole localization of isoform 3 of SGO1 and plays a role in regulating its centriole cohesion function. Mediates phosphorylation of FBXO5/EMI1, a negative regulator of the APC/C complex during prophase, leading to FBXO5/EMI1 ubiquitination and degradation by the proteasome. Acts as a negative regulator of p53 family members: phosphorylates TOPORS, leading to inhibit the sumoylation of p53/TP53 and simultaneously enhance the ubiquitination and subsequent degradation of p53/TP53. Phosphorylates the transactivation domain of the transcription factor p73/TP73, leading to inhibit p73/TP73-mediated transcriptional activation and pro-apoptotic functions. Phosphorylates BORA, and thereby promotes the degradation of BORA. Contributes to the regulation of AURKA function. Also required for recovery after DNA damage checkpoint and entry into mitosis. Phosphorylates MISP, leading to stabilization of cortical and astral microtubule attachments required for proper spindle positioning. Together with MEIKIN, acts as a regulator of kinetochore function during meiosis I: required both for mono-orientation of kinetochores on sister chromosomes and protection of centromeric cohesin from separase-mediated cleavage. Phosphorylates CEP68 and is required for its degradation. Regulates nuclear envelope breakdown during prophase by phosphorylating DCTN1 resulting in its localization in the nuclear envelope. Phosphorylates the heat shock transcription factor HSF1, promoting HSF1 nuclear translocation upon heat shock. Phosphorylates HSF1 also in the early mitotic period; this phosphorylation regulates HSF1 localization to the spindle pole, the recruitment of the SCF(BTRC) ubiquitin ligase complex induicing HSF1 degradation, and hence mitotic progression. Regulates mitotic progression by phosphorylating RIOK2. Through the phosphorylation of DZIP1 regulates the localization during mitosis of the BBSome, a ciliary protein complex involved in cilium biogenesis. Regulates DNA repair during mitosis by mediating phosphorylation of POLQ and RHNO1, thereby promoting POLQ recruitment to DNA damage sites. Phosphorylates ATXN10 which may play a role in the regulation of cytokinesis and may stimulate the proteasome-mediated degradation of ATXN10. The protein is Serine/threonine-protein kinase PLK1 (Plk1) of Mus musculus (Mouse).